The sequence spans 541 residues: Tegument protein UL21 homolog (541 aa).

The protein belongs to the alphaherpesvirinae UL21 protein family. Interacts (via C-terminus) with UL16.

The protein resides in the virion tegument. It is found in the host cytoplasm. It localises to the host nucleus. Functionally, may participate in DNA packaging/capsid maturation events. Promotes efficient incorporation of tegument proteins UL46, UL49, and US3 homologs into virions. May also play a role in capsid transport to the trans-Golgi network (TGN). The polypeptide is Tegument protein UL21 homolog (Varicella-zoster virus (strain Oka vaccine) (HHV-3)).